A 146-amino-acid polypeptide reads, in one-letter code: Transcriptional regulator MraZ (146 aa).

SpoVT-AbrB domains are found at residues 5–47 (EYYH…TITD) and 76–119 (SIQV…AKEK).

It belongs to the MraZ family. As to quaternary structure, forms oligomers.

Its subcellular location is the cytoplasm. The protein resides in the nucleoid. The sequence is that of Transcriptional regulator MraZ from Dictyoglomus thermophilum (strain ATCC 35947 / DSM 3960 / H-6-12).